We begin with the raw amino-acid sequence, 563 residues long: Cysteine--tRNA ligase, chloroplastic/mitochondrial (563 aa).

Residue C91 participates in Zn(2+) binding. G92 contributes to the L-cysteine binding site. A 'HIGH' region motif is present at residues 93-103 (VTAYDLSHIGH). L-cysteine is bound at residue T131. The 'KIIK' region motif lies at 136 to 139 (KIIA). Zn(2+)-binding residues include C271, H296, and E300. Position 296 (H296) interacts with L-cysteine. A 'KMSKS' region motif is present at residues 328 to 332 (KMSKS). ATP is bound at residue K331.

The protein belongs to the class-I aminoacyl-tRNA synthetase family. Requires Zn(2+) as cofactor.

The protein resides in the plastid. It localises to the chloroplast. It is found in the mitochondrion. It carries out the reaction tRNA(Cys) + L-cysteine + ATP = L-cysteinyl-tRNA(Cys) + AMP + diphosphate. Its function is as follows. Required for female gametophyte development. Is necessary for the fusion of central cell nuclei and programmed cell death (PCD) of the antipodals. The protein is Cysteine--tRNA ligase, chloroplastic/mitochondrial of Arabidopsis thaliana (Mouse-ear cress).